Here is a 112-residue protein sequence, read N- to C-terminus: Putative galactitol utilization operon repressor (112 aa).

An HTH deoR-type domain is found at 5-60; the sequence is SFERRNKIIQLVNEQGTVLVQDLAGVFAASEATIRADLRFLEQKGVVTRFHGGAAK. The H-T-H motif DNA-binding region spans 22–41; it reads VLVQDLAGVFAASEATIRAD.

Functionally, repressor of the gat operon for galacticol transport and metabolism. In K12 strains the operon is constitutively expressed because this gene is inactive. This is Putative galactitol utilization operon repressor (gatR) from Escherichia coli (strain K12).